A 199-amino-acid chain; its full sequence is NAD(P)H quinone oxidoreductase PST3 (199 aa).

One can recognise a Flavodoxin-like domain in the interval 5–193 (VAIIIYSLYH…EIAFIQGKSF (189 aa)). FMN-binding positions include 11 to 15 (SLYHH) and 111 to 165 (IFVS…SPYG).

It belongs to the WrbA family. Requires FMN as cofactor.

The protein resides in the cell membrane. The catalysed reaction is a quinone + NADH + H(+) = a quinol + NAD(+). The enzyme catalyses a quinone + NADPH + H(+) = a quinol + NADP(+). In terms of biological role, flavodoxin-like protein (FLP) that plays a role in cell wall integrity, oxidative stress protection and virulence. FLPs act as NAD(P)H quinone oxidoreductases. Reduces ubiquinone (coenzyme Q), enabling it to serve as an antioxidant in the membrane. The chain is NAD(P)H quinone oxidoreductase PST3 from Candida albicans (strain SC5314 / ATCC MYA-2876) (Yeast).